The sequence spans 195 residues: Insertion element IS136 uncharacterized protein Atu4601 (195 aa).

Residues 25–194 (MVMRSNLRWC…SPRQFIRAKS (170 aa)) enclose the Integrase catalytic domain.

The polypeptide is Insertion element IS136 uncharacterized protein Atu4601 (Agrobacterium fabrum (strain C58 / ATCC 33970) (Agrobacterium tumefaciens (strain C58))).